Here is a 224-residue protein sequence, read N- to C-terminus: Glutathione S-transferase U8 (224 aa).

The GST N-terminal domain maps to 5–85 (EHVKLLGLWG…YIEDTWKTTH (81 aa)). Glutathione is bound by residues 15–16 (SP), 42–43 (NR), 56–57 (KV), and 69–70 (ES). The GST C-terminal domain maps to 91-213 (DPYERAMARF…LPPKEKLVAV (123 aa)). Thr-152 is subject to Phosphothreonine.

This sequence belongs to the GST superfamily. Tau family.

The protein resides in the cytoplasm. The protein localises to the cytosol. It catalyses the reaction RX + glutathione = an S-substituted glutathione + a halide anion + H(+). Functionally, may be involved in the conjugation of reduced glutathione to a wide number of exogenous and endogenous hydrophobic electrophiles and have a detoxification role against certain herbicides. The chain is Glutathione S-transferase U8 (GSTU8) from Arabidopsis thaliana (Mouse-ear cress).